Consider the following 79-residue polypeptide: Small ribosomal subunit protein bS18 (79 aa).

It belongs to the bacterial ribosomal protein bS18 family. As to quaternary structure, part of the 30S ribosomal subunit. Forms a tight heterodimer with protein bS6.

In terms of biological role, binds as a heterodimer with protein bS6 to the central domain of the 16S rRNA, where it helps stabilize the platform of the 30S subunit. This is Small ribosomal subunit protein bS18 from Enterococcus faecalis (strain ATCC 700802 / V583).